The primary structure comprises 774 residues: MWTPGGPPGSAGWDRRRLGARLRAAFAGLQELQGLRATQQERVRGALALQPPPAPAAPCGPHGLHGPEQQLEAALAALQEQLSRLRQQDIGLKTHLDQLDLQISKLQLDVGTASGEALDSDSRPSSGFYEMSDGGSCSLSTSCASVCSDHISPSLGSLLPVAQAHKARPSMGDWRPRSVDETTVPAWRPQATEEGARPPGSVEDAGQPWGTFWPRPVSTGDLDRALPADTGLQKASADAELLGLLCQGVDIPLHVPDPKYRQDLVSQGGREVYPYPSPLHAVALQSPLFVLTKETPQRGGPSFPRESPRGPAGLNTIQTGPVLEAGPARARAYIDRLLHLWGRETPAKGSEGEQGPLRHAASPSPQRQGGWSTDGGGRLLVFAPGREDEGGPAQSRGAGRGGPQQQGYMPLEGPQQSGSLPEEGSKPSNSCVLRETMVQASPSSKAQQTPSAQDYGRGNIISPSRMLDKSPSPASGHFAHPSFAASLKMGPPKSKAEKIKRSPMDKVLRFARQPLLLLDRPEGAHAAPQPSLEWDPAHWPTGRGGLQRRPALAWEAPGRSCSESTLYPMPVLVPLAVAPQESHRTSAQALFPFEASLLTSVARRKHRRWQSTVEISARARLASCPESNLGPPRPVARRAGGPLARGRPSLVRQDAYTRSDSEPSKHSAECDPRFPSVIPETSEGESSDHTTNRFGDRESSSSDEEGGAQSRDCDLALGYVAAGHAELAWTQEAPVSSGPLLSPVPKLCRIKASKALKKKIRRFQPTALKVMTMV.

A coiled-coil region spans residues 67–93; the sequence is PEQQLEAALAALQEQLSRLRQQDIGLK. Disordered stretches follow at residues 188–225, 295–319, 345–500, and 624–710; these read RPQA…LDRA, TPQR…TIQT, TPAK…EKIK, and CPES…GAQS. A compositionally biased stretch (polar residues) spans 438–452; that stretch reads VQASPSSKAQQTPSA. A compositionally biased stretch (low complexity) spans 637–648; it reads RRAGGPLARGRP. Composition is skewed to basic and acidic residues over residues 655 to 672 and 686 to 700; these read AYTR…ECDP and SSDH…RESS. A PDZ-binding motif is present at residues 771-774; sequence MTMV.

The protein belongs to the dapper family. As to quaternary structure, can form homodimers and heterodimers with DACT1 or DACT3. Interacts with CSNK1D, PKA catalytic subunit, PKC-type kinase, CSNK2B, DVL1, DVL2, DVL3, VANGL1, VANGL2, TGFBR1, CTNNB1, CTNND2, CTNND1, LEF1, TCF7, TCF7L1 and HDAC1.

Its function is as follows. Involved in regulation of intracellular signaling pathways during development. Negatively regulates the Nodal signaling pathway, possibly by promoting the lysosomal degradation of Nodal receptors, such as TGFBR1. May be involved in control of the morphogenetic behavior of kidney ureteric bud cells by keeping cells epithelial and restraining their mesenchymal character. May play an inhibitory role in the re-epithelialization of skin wounds by attenuating TGF-beta signaling. This Homo sapiens (Human) protein is Dapper homolog 2 (DACT2).